The primary structure comprises 339 residues: Cathepsin B (339 aa).

Residues 1-17 (MWWSLIPLSCLLALTSA) form the signal peptide. A propeptide spans 18 to 79 (HDKPSSHPLS…ERVGFSEDIN (62 aa)) (activation peptide). 6 cysteine pairs are disulfide-bonded: Cys-93-Cys-122, Cys-105-Cys-150, Cys-141-Cys-207, Cys-142-Cys-146, Cys-179-Cys-211, and Cys-187-Cys-198. Cys-108 is an active-site residue. A glycan (N-linked (GlcNAc...) asparagine) is linked at Asn-192. Lys-220 is subject to N6-acetyllysine. Active-site residues include His-278 and Asn-298. A propeptide spanning residues 334 to 339 (QYWGRF) is cleaved from the precursor.

It belongs to the peptidase C1 family. In terms of assembly, dimer of a heavy chain and a light chain cross-linked by a disulfide bond. Interacts with SRPX2. Directly interacts with SHKBP1. In terms of tissue distribution, expressed in the epithelial cells of the prostate and mammary gland.

It localises to the lysosome. The protein localises to the melanosome. It is found in the secreted. The protein resides in the extracellular space. Its subcellular location is the apical cell membrane. The enzyme catalyses Hydrolysis of proteins with broad specificity for peptide bonds. Preferentially cleaves -Arg-Arg-|-Xaa bonds in small molecule substrates (thus differing from cathepsin L). In addition to being an endopeptidase, shows peptidyl-dipeptidase activity, liberating C-terminal dipeptides.. Functionally, thiol protease which is believed to participate in intracellular degradation and turnover of proteins. Cleaves matrix extracellular phosphoglycoprotein MEPE. Involved in the solubilization of cross-linked TG/thyroglobulin in the thyroid follicle lumen. Has also been implicated in tumor invasion and metastasis. This chain is Cathepsin B (Ctsb), found in Rattus norvegicus (Rat).